Reading from the N-terminus, the 359-residue chain is Alanine racemase (359 aa).

The Proton acceptor; specific for D-alanine role is filled by lysine 35. Lysine 35 bears the N6-(pyridoxal phosphate)lysine mark. Arginine 131 contributes to the substrate binding site. The active-site Proton acceptor; specific for L-alanine is the tyrosine 253. Methionine 301 is a substrate binding site.

It belongs to the alanine racemase family. Pyridoxal 5'-phosphate serves as cofactor.

It carries out the reaction L-alanine = D-alanine. It functions in the pathway amino-acid biosynthesis; D-alanine biosynthesis; D-alanine from L-alanine: step 1/1. Functionally, catalyzes the interconversion of L-alanine and D-alanine. May also act on other amino acids. The polypeptide is Alanine racemase (alr) (Laribacter hongkongensis (strain HLHK9)).